We begin with the raw amino-acid sequence, 248 residues long: MRVDGRKCNQIRPVKITRNYTKYAEGSVLIENGDTKVICTASIEDKVPPFLKGRGEGWITCEYNMIPRATQVRKARDINRGRIDGRTMEIQRIIGRALRSVVDLRAIGEKTIWVDCDVIQADGGTRTASISGAFVALVDAVNKLHKQNPFTIYPIRDFVSAVSVGIVNDTRMLDLCYLEDSRAKVDMNVVMTDSGEFVEIQGTGEQNPFTREDLKELLALAEKGIKSMISAQKDSLKMDSLWIGTGGE.

Phosphate is bound by residues Arg86 and 124 to 126 (GTR).

This sequence belongs to the RNase PH family. In terms of assembly, homohexameric ring arranged as a trimer of dimers.

It carries out the reaction tRNA(n+1) + phosphate = tRNA(n) + a ribonucleoside 5'-diphosphate. Phosphorolytic 3'-5' exoribonuclease that plays an important role in tRNA 3'-end maturation. Removes nucleotide residues following the 3'-CCA terminus of tRNAs; can also add nucleotides to the ends of RNA molecules by using nucleoside diphosphates as substrates, but this may not be physiologically important. Probably plays a role in initiation of 16S rRNA degradation (leading to ribosome degradation) during starvation. The protein is Ribonuclease PH of Clostridium kluyveri (strain NBRC 12016).